The primary structure comprises 233 residues: Large ribosomal subunit protein uL1 (233 aa).

The protein belongs to the universal ribosomal protein uL1 family. As to quaternary structure, part of the 50S ribosomal subunit.

Its function is as follows. Binds directly to 23S rRNA. The L1 stalk is quite mobile in the ribosome, and is involved in E site tRNA release. Functionally, protein L1 is also a translational repressor protein, it controls the translation of the L11 operon by binding to its mRNA. This Brucella melitensis biotype 1 (strain ATCC 23456 / CCUG 17765 / NCTC 10094 / 16M) protein is Large ribosomal subunit protein uL1.